Here is a 408-residue protein sequence, read N- to C-terminus: Argininosuccinate synthase (408 aa).

ATP-binding positions include Ala-11–Ser-19 and Ala-38. Positions 91 and 96 each coordinate L-citrulline. Gly-121 is an ATP binding site. Residues Thr-123, Asn-127, and Asp-128 each contribute to the L-aspartate site. Asn-127 is a binding site for L-citrulline. Residues Arg-131, Ser-182, Ser-191, Glu-267, and Tyr-279 each contribute to the L-citrulline site.

It belongs to the argininosuccinate synthase family. Type 1 subfamily. Homotetramer.

It localises to the cytoplasm. It carries out the reaction L-citrulline + L-aspartate + ATP = 2-(N(omega)-L-arginino)succinate + AMP + diphosphate + H(+). It participates in amino-acid biosynthesis; L-arginine biosynthesis; L-arginine from L-ornithine and carbamoyl phosphate: step 2/3. The polypeptide is Argininosuccinate synthase (Zymomonas mobilis subsp. mobilis (strain ATCC 31821 / ZM4 / CP4)).